A 1069-amino-acid polypeptide reads, in one-letter code: Regulator of nonsense transcripts 1 (1069 aa).

The disordered stretch occupies residues 1 to 86 (MDDSDDEYSR…SEKSLTEEQH (86 aa)). The span at 28-50 (IGNTQDSQFAYEQFSVPTQSSQA) shows a compositional bias: polar residues. Low complexity predominate over residues 51-65 (TDLLPGGTDGTTNDL). Residues 77–86 (SEKSLTEEQH) are compositionally biased toward basic and acidic residues. Residues 87–244 (EQKLPEHACR…VRMEELWRDH (158 aa)) enclose the Upf1 CH-rich domain. Cys-95, Cys-98, Cys-109, Cys-112, Cys-117, His-127, His-131, His-137, Cys-155, Cys-158, Cys-181, and Cys-185 together coordinate Zn(2+). The C3H stretch occupies residues 95–127 (CRYCGISDPLCVAKCTVCRKWFCNSNDGTSGGH). A CC/SHH/C region spans residues 109–137 (CTVCRKWFCNSNDGTSGGHIVHHMVRSQH). The tract at residues 155-185 (CYRCGSKNVFNLGFIPGKKDQVVVIICRTPC) is C4. ATP contacts are provided by residues Gln-450, 467 to 474 (GPPGTGKT), Gln-639, Tyr-676, and Glu-807. The interval 966 to 1069 (ARNQKDRRRG…MDDLLFSQDC (104 aa)) is disordered. A compositionally biased stretch (low complexity) spans 991–1013 (SQGMMSQQSQQYPPQGASSQSQY).

Belongs to the DNA2/NAM7 helicase family. In terms of processing, phosphorylated probably by smg-1. Smg-3 and smg-4 are required for phosphorylation.

The protein localises to the cytoplasm. The enzyme catalyses ATP + H2O = ADP + phosphate + H(+). In terms of biological role, RNA-dependent helicase required for nonsense-mediated decay (NMD) of aberrant mRNAs containing premature stop codons and modulates the expression level of normal mRNAs. Is recruited to mRNAs upon translation termination and undergoes a cycle of phosphorylation and dephosphorylation; its phosphorylation appears to be a key step in NMD. The formation of an smg-2-3-4 surveillance complex is believed to activate NMD. In Caenorhabditis elegans, this protein is Regulator of nonsense transcripts 1 (smg-2).